The primary structure comprises 86 residues: Serine protease inhibitor Kazal-type 4 (86 aa).

The N-terminal stretch at methionine 1–alanine 26 is a signal peptide. A Kazal-like domain is found at phenylalanine 31–cysteine 86. 3 disulfides stabilise this stretch: cysteine 37–cysteine 68, cysteine 46–cysteine 65, and cysteine 54–cysteine 86.

As to expression, expressed in the intestinal tract.

Its subcellular location is the secreted. The sequence is that of Serine protease inhibitor Kazal-type 4 (Spink4) from Mus musculus (Mouse).